The following is a 269-amino-acid chain: Mitochondrial genome maintenance protein MGM101 (269 aa).

Residues 1-30 (MKSIFKVRGCVSHAAQFCQKRTVVSTGTSN) constitute a mitochondrion transit peptide.

This sequence belongs to the MGM101 family.

Its subcellular location is the mitochondrion matrix. The protein resides in the mitochondrion nucleoid. Performs an essential function in the repair of oxidatively damaged mtDNA that is required for the maintenance of the mitochondrial genome. Binds to DNA. This chain is Mitochondrial genome maintenance protein MGM101 (MGM101), found in Saccharomyces cerevisiae (strain ATCC 204508 / S288c) (Baker's yeast).